Consider the following 1401-residue polypeptide: Kinesin-like protein KIF27 (1401 aa).

One can recognise a Kinesin motor domain in the interval 5 to 341; it reads PVKVAVRIRP…LKYANRARNI (337 aa). Residue 84-91 coordinates ATP; that stretch reads GQTGSGKT. Coiled coils occupy residues 352–413 and 489–557; these read ESDR…GYQC and LAAD…KLNL. Serine 643, serine 646, serine 672, serine 675, and serine 704 each carry phosphoserine. Residues 643–662 are disordered; it reads SDNSDDEESEGQEKSGTRCR. Coiled coils occupy residues 705-886, 916-1070, 1118-1154, and 1190-1219; these read QELN…IQLK, DHLQ…AAIE, NKVV…LESA, and EGIM…TSRD. A Phosphoserine modification is found at serine 999. Positions 1259 to 1280 are enriched in basic and acidic residues; the sequence is EELKWASRPESMKLSGREREMD. Residues 1259 to 1332 are disordered; that stretch reads EELKWASRPE…TETDDNQFTK (74 aa). Residues 1281 to 1292 show a composition bias toward polar residues; the sequence is SSASSLRTQPNP. Serine 1367 and serine 1389 each carry phosphoserine.

The protein belongs to the TRAFAC class myosin-kinesin ATPase superfamily. Kinesin family. KIF27 subfamily. In terms of assembly, interacts with STK36. Testis, pancreatic islet, germ cell tumors and Jurkat T-cells.

It is found in the cytoplasm. Its subcellular location is the cytoskeleton. It localises to the cell projection. The protein localises to the cilium. Functionally, plays an essential role in motile ciliogenesis. The sequence is that of Kinesin-like protein KIF27 (KIF27) from Homo sapiens (Human).